We begin with the raw amino-acid sequence, 636 residues long: 1-deoxy-D-xylulose-5-phosphate synthase (636 aa).

Residues histidine 72 and 113–115 (GHA) contribute to the thiamine diphosphate site. Aspartate 144 provides a ligand contact to Mg(2+). Residues 145–146 (GS), asparagine 174, tyrosine 287, and glutamate 370 each bind thiamine diphosphate. Asparagine 174 is a binding site for Mg(2+).

The protein belongs to the transketolase family. DXPS subfamily. As to quaternary structure, homodimer. Requires Mg(2+) as cofactor. Thiamine diphosphate is required as a cofactor.

It carries out the reaction D-glyceraldehyde 3-phosphate + pyruvate + H(+) = 1-deoxy-D-xylulose 5-phosphate + CO2. It participates in metabolic intermediate biosynthesis; 1-deoxy-D-xylulose 5-phosphate biosynthesis; 1-deoxy-D-xylulose 5-phosphate from D-glyceraldehyde 3-phosphate and pyruvate: step 1/1. In terms of biological role, catalyzes the acyloin condensation reaction between C atoms 2 and 3 of pyruvate and glyceraldehyde 3-phosphate to yield 1-deoxy-D-xylulose-5-phosphate (DXP). This chain is 1-deoxy-D-xylulose-5-phosphate synthase, found in Synechococcus sp. (strain ATCC 27144 / PCC 6301 / SAUG 1402/1) (Anacystis nidulans).